We begin with the raw amino-acid sequence, 310 residues long: Porphobilinogen deaminase (310 aa).

The residue at position 242 (Cys242) is an S-(dipyrrolylmethanemethyl)cysteine.

It belongs to the HMBS family. In terms of assembly, monomer. The cofactor is dipyrromethane.

The enzyme catalyses 4 porphobilinogen + H2O = hydroxymethylbilane + 4 NH4(+). It functions in the pathway porphyrin-containing compound metabolism; protoporphyrin-IX biosynthesis; coproporphyrinogen-III from 5-aminolevulinate: step 2/4. Its function is as follows. Tetrapolymerization of the monopyrrole PBG into the hydroxymethylbilane pre-uroporphyrinogen in several discrete steps. This Shewanella sp. (strain ANA-3) protein is Porphobilinogen deaminase.